The primary structure comprises 238 residues: Ribitol-5-phosphate cytidylyltransferase 2 (238 aa).

Residues 7-10 (LAGG) and 81-87 (GTDRNET) each bind CTP.

Belongs to the IspD/TarI cytidylyltransferase family. TarI subfamily.

It carries out the reaction D-ribitol 5-phosphate + CTP + H(+) = CDP-L-ribitol + diphosphate. The protein operates within cell wall biogenesis; poly(ribitol phosphate) teichoic acid biosynthesis. Catalyzes the transfer of the cytidylyl group of CTP to D-ribitol 5-phosphate. This Staphylococcus aureus (strain bovine RF122 / ET3-1) protein is Ribitol-5-phosphate cytidylyltransferase 2.